The sequence spans 64 residues: Large ribosomal subunit protein uL29 (64 aa).

The protein belongs to the universal ribosomal protein uL29 family.

The sequence is that of Large ribosomal subunit protein uL29 from Teredinibacter turnerae (strain ATCC 39867 / T7901).